The sequence spans 314 residues: Glycerate dehydrogenase (314 aa).

Residues Thr74, 157 to 158, 228 to 230, and Asp254 contribute to the NAD(+) site; these read AL and TAR. Arg230 is a catalytic residue. Glu259 is a catalytic residue. His280 acts as the Proton donor in catalysis. Position 280–283 (280–283) interacts with NAD(+); it reads HVAW.

This sequence belongs to the D-isomer specific 2-hydroxyacid dehydrogenase family. As to quaternary structure, homodimer.

Its subcellular location is the cytoplasm. It catalyses the reaction (R)-glycerate + NAD(+) = 3-hydroxypyruvate + NADH + H(+). It functions in the pathway one-carbon metabolism; formaldehyde assimilation via serine pathway. In terms of biological role, plays a central role in assimilation of carbon. It converts hydroxypyruvate to glycerate as a key step in the serine cycle, and may also play an important role in C2 reactions, by interconverting glyoxylate and glycolate. This is Glycerate dehydrogenase (hprA) from Methylorubrum extorquens (strain ATCC 14718 / DSM 1338 / JCM 2805 / NCIMB 9133 / AM1) (Methylobacterium extorquens).